Consider the following 34-residue polypeptide: Photosystem II reaction center protein T (34 aa).

Residues 3 to 23 (SVAYILIFTLTIGTLFFAVAF) traverse the membrane as a helical segment.

Belongs to the PsbT family. PSII is composed of 1 copy each of membrane proteins PsbA, PsbB, PsbC, PsbD, PsbE, PsbF, PsbH, PsbI, PsbJ, PsbK, PsbL, PsbM, PsbT, PsbX, PsbY, PsbZ, Psb30/Ycf12, peripheral proteins PsbO, CyanoQ (PsbQ), PsbU, PsbV and a large number of cofactors. It forms dimeric complexes.

The protein localises to the cellular thylakoid membrane. Functionally, found at the monomer-monomer interface of the photosystem II (PS II) dimer, plays a role in assembly and dimerization of PSII. PSII is a light-driven water plastoquinone oxidoreductase, using light energy to abstract electrons from H(2)O, generating a proton gradient subsequently used for ATP formation. The chain is Photosystem II reaction center protein T from Mastigocladus laminosus (Fischerella sp.).